Reading from the N-terminus, the 556-residue chain is Probable glucomannan 4-beta-mannosyltransferase 3 (556 aa).

A helical transmembrane segment spans residues 56-76 (IFVFIPILKCLVTICLVMSLL). Residue Asp-159 is part of the active site. Asp-218 and Asp-220 together coordinate substrate. Asp-312 is a catalytic residue. 4 helical membrane-spanning segments follow: residues 391 to 411 (IVVHIFTFVFYCLILPTTVLF), 428 to 448 (ITILNAIATPRSLHLLVFWIL), 509 to 529 (LVVGLYIFFCGCYDFAYGGSY), and 530 to 550 (FYVYLFLQSCAFFVAGVGYIG).

Belongs to the glycosyltransferase 2 family. Plant cellulose synthase-like A subfamily.

It is found in the golgi apparatus membrane. It carries out the reaction GDP-mannose + (glucomannan)n = GDP + (glucomannan)n+1.. Functionally, probable mannan synthase which consists of a 4-beta-mannosyltransferase activity on mannan using GDP-mannose. The beta-1,4-mannan product is the backbone for galactomannan synthesis by galactomannan galactosyltransferase. Galactomannan is a noncellulosic polysaccharides of plant cell wall. In Arabidopsis thaliana (Mouse-ear cress), this protein is Probable glucomannan 4-beta-mannosyltransferase 3.